The primary structure comprises 575 residues: UvrABC system protein C (575 aa).

A GIY-YIG domain is found at 15–90 (AEPGVYQFEA…IKRHQPRYNV (76 aa)). A UVR domain is found at 198–233 (GVLAEPLRREMETAAASQAFERAASLRDRLEAVETF).

This sequence belongs to the UvrC family. Interacts with UvrB in an incision complex.

Its subcellular location is the cytoplasm. The UvrABC repair system catalyzes the recognition and processing of DNA lesions. UvrC both incises the 5' and 3' sides of the lesion. The N-terminal half is responsible for the 3' incision and the C-terminal half is responsible for the 5' incision. The chain is UvrABC system protein C from Natronomonas pharaonis (strain ATCC 35678 / DSM 2160 / CIP 103997 / JCM 8858 / NBRC 14720 / NCIMB 2260 / Gabara) (Halobacterium pharaonis).